The primary structure comprises 168 residues: HTH-type transcriptional regulator IscR (168 aa).

The region spanning Lys2–Lys131 is the HTH rrf2-type domain. The segment at residues Leu28–Lys51 is a DNA-binding region (H-T-H motif). Cys92, Cys98, and Cys104 together coordinate [2Fe-2S] cluster.

Requires [2Fe-2S] cluster as cofactor.

Functionally, regulates the transcription of several operons and genes involved in the biogenesis of Fe-S clusters and Fe-S-containing proteins. This Vibrio campbellii (strain ATCC BAA-1116) protein is HTH-type transcriptional regulator IscR.